The sequence spans 368 residues: 4-hydroxy-3-methylbut-2-en-1-yl diphosphate synthase (flavodoxin) (368 aa).

Cys-271, Cys-274, Cys-306, and Glu-313 together coordinate [4Fe-4S] cluster.

The protein belongs to the IspG family. [4Fe-4S] cluster serves as cofactor.

It catalyses the reaction (2E)-4-hydroxy-3-methylbut-2-enyl diphosphate + oxidized [flavodoxin] + H2O + 2 H(+) = 2-C-methyl-D-erythritol 2,4-cyclic diphosphate + reduced [flavodoxin]. It participates in isoprenoid biosynthesis; isopentenyl diphosphate biosynthesis via DXP pathway; isopentenyl diphosphate from 1-deoxy-D-xylulose 5-phosphate: step 5/6. In terms of biological role, converts 2C-methyl-D-erythritol 2,4-cyclodiphosphate (ME-2,4cPP) into 1-hydroxy-2-methyl-2-(E)-butenyl 4-diphosphate. In Mannheimia succiniciproducens (strain KCTC 0769BP / MBEL55E), this protein is 4-hydroxy-3-methylbut-2-en-1-yl diphosphate synthase (flavodoxin).